The primary structure comprises 206 residues: Large ribosomal subunit protein uL22m (206 aa).

The transit peptide at 1–40 (MAAALLRELGALRVPNLRIWATQTLRVLPPSCIHTSASLD) directs the protein to the mitochondrion.

It belongs to the universal ribosomal protein uL22 family. As to quaternary structure, component of the mitochondrial ribosome large subunit (39S) which comprises a 16S rRNA and about 50 distinct proteins.

It localises to the mitochondrion. This chain is Large ribosomal subunit protein uL22m (Mrpl22), found in Mus musculus (Mouse).